The chain runs to 197 residues: Phosphoheptose isomerase (197 aa).

One can recognise an SIS domain in the interval 40 to 197 (CIASIAQGGK…LVEHSIFGKQ (158 aa)). 55 to 57 (NGG) lines the substrate pocket. Histidine 64 and glutamate 68 together coordinate Zn(2+). Residues glutamate 68, 97 to 98 (ND), 123 to 125 (STS), serine 128, and glutamine 175 each bind substrate. 2 residues coordinate Zn(2+): glutamine 175 and histidine 183.

It belongs to the SIS family. GmhA subfamily. As to quaternary structure, homotetramer. Zn(2+) serves as cofactor.

It localises to the cytoplasm. The enzyme catalyses 2 D-sedoheptulose 7-phosphate = D-glycero-alpha-D-manno-heptose 7-phosphate + D-glycero-beta-D-manno-heptose 7-phosphate. Its pathway is carbohydrate biosynthesis; D-glycero-D-manno-heptose 7-phosphate biosynthesis; D-glycero-alpha-D-manno-heptose 7-phosphate and D-glycero-beta-D-manno-heptose 7-phosphate from sedoheptulose 7-phosphate: step 1/1. The protein operates within capsule biogenesis; capsule polysaccharide biosynthesis. Its function is as follows. Catalyzes the isomerization of sedoheptulose 7-phosphate in D-glycero-D-manno-heptose 7-phosphate. This Burkholderia pseudomallei (strain K96243) protein is Phosphoheptose isomerase (gmhA).